Reading from the N-terminus, the 558-residue chain is Arginine--tRNA ligase (558 aa).

The short motif at 119–129 is the 'HIGH' region element; that stretch reads ANPDGPLHVGH.

Belongs to the class-I aminoacyl-tRNA synthetase family.

Its subcellular location is the cytoplasm. It catalyses the reaction tRNA(Arg) + L-arginine + ATP = L-arginyl-tRNA(Arg) + AMP + diphosphate. This chain is Arginine--tRNA ligase, found in Methanothrix thermoacetophila (strain DSM 6194 / JCM 14653 / NBRC 101360 / PT) (Methanosaeta thermophila).